The chain runs to 482 residues: ATP synthase subunit beta (482 aa).

Residue 161-168 participates in ATP binding; that stretch reads GGAGVGKT.

It belongs to the ATPase alpha/beta chains family. As to quaternary structure, F-type ATPases have 2 components, CF(1) - the catalytic core - and CF(0) - the membrane proton channel. CF(1) has five subunits: alpha(3), beta(3), gamma(1), delta(1), epsilon(1). CF(0) has four main subunits: a(1), b(1), b'(1) and c(9-12).

The protein resides in the cellular thylakoid membrane. It catalyses the reaction ATP + H2O + 4 H(+)(in) = ADP + phosphate + 5 H(+)(out). Its function is as follows. Produces ATP from ADP in the presence of a proton gradient across the membrane. The catalytic sites are hosted primarily by the beta subunits. This Gloeothece citriformis (strain PCC 7424) (Cyanothece sp. (strain PCC 7424)) protein is ATP synthase subunit beta.